The primary structure comprises 96 residues: MANFVLKAEKREDLGTGASRRLRRAGKIPAVIYGGEKEAVSVLLDHDKVLHSTEDKEFFSSEITLDIDGKQEKVIIKALQRHPYKVKLIHADFMRV.

This sequence belongs to the bacterial ribosomal protein bL25 family. Part of the 50S ribosomal subunit; part of the 5S rRNA/L5/L18/L25 subcomplex. Contacts the 5S rRNA. Binds to the 5S rRNA independently of L5 and L18.

In terms of biological role, this is one of the proteins that binds to the 5S RNA in the ribosome where it forms part of the central protuberance. The chain is Large ribosomal subunit protein bL25 from Francisella tularensis subsp. holarctica (strain FTNF002-00 / FTA).